A 374-amino-acid polypeptide reads, in one-letter code: MIVAFCLYKYFPFGGLQRDFMRIASTVAARGHHVRVYTQSWEGDCPKAFELIQVPVKSHTNHGRNAEYYAWVQNHLKEHPADRVVGFNKMPGLDVYFAADVCYAEKVAQEKGFLYRLTSRYRHYAAFERATFEQGKSTKLMMLTDKQIADFQKHYQTEPERFQILPPGIYPDRKYSEQIPNSREIYRQKNGIKEQQNLLLQVGSDFGRKGVDRSIEALASLPESLRHNTLLFVVGQDKPRKFEALAEKLGVRSNVHFFSGRNDVSELMAAADLLLHPAYQEAAGIVLLEAITAGLPVLTTAVCGYAHYIADANCGTVIAEPFSQEQLNEVLRKALTQSPLRMAWAENARHYADTQDLYSLPEKAADIITGGLDG.

UDP-alpha-D-glucose contacts are provided by glycine 15 and aspartate 19. The segment at 103–132 (YAEKVAQEKGFLYRLTSRYRHYAAFERATF) is membrane-interacting region. UDP-alpha-D-glucose contacts are provided by arginine 173, arginine 208, lysine 209, arginine 261, glutamate 281, alanine 283, glycine 284, isoleucine 285, valine 286, and glutamate 289.

The protein belongs to the glycosyltransferase group 1 family. Glycosyltransferase 4 subfamily.

Its subcellular location is the cell inner membrane. It functions in the pathway bacterial outer membrane biogenesis; LPS core biosynthesis. With respect to regulation, inhibited by divalent metal ions such as Mg(2+), Mn(2+), Ca(2+), Zn(2+), Co(2+), Ni(2+) and Cu(2+). In terms of biological role, glucosyltransferase involved in the biosynthesis of the core oligosaccharide region of lipopolysaccharide (LPS). Catalyzes the addition of the first outer-core glucose from UDP-glucose to the inner-core heptose II. Cannot use other sugar donors, such as UDP-galactose, UDP-glucuronic acid, UDP-galacuronic acid, GDP-mannose, ADP-glucose and GDP-glucose. In the absence of a lipid acceptor, can slowly hydrolyze UDP-glucose. The chain is Lipopolysaccharide glucosyltransferase WaaG from Escherichia coli (strain K12).